The following is a 140-amino-acid chain: MKMFKSLSLLPRIVSPFQKCYSTDLISLVGIPRVKITKGQNRYLLVNIHTHGFTKYGRVIVRGADVDNHLTVFDSILEELEPQGICAKILGGGRILNEADSKKIKIYGTSRTFGSADHTRTRNILHSWTTYKDFKITVKN.

Position 42 (R42) interacts with substrate. H69 serves as the catalytic Proton acceptor. S110 to T112 contributes to the substrate binding site.

This sequence belongs to the janus family.

Functionally, janA and janB regulate somatic sex differentiation. This is Sex-regulated protein janus-B (janB) from Drosophila teissieri (Fruit fly).